A 231-amino-acid polypeptide reads, in one-letter code: Orotidine 5'-phosphate decarboxylase (231 aa).

Substrate contacts are provided by residues Asp-11, Lys-33, 60–69 (DLKFHDIPNT), Thr-119, Arg-180, Gln-189, Gly-209, and Arg-210. The active-site Proton donor is Lys-62.

This sequence belongs to the OMP decarboxylase family. Type 1 subfamily. As to quaternary structure, homodimer.

It carries out the reaction orotidine 5'-phosphate + H(+) = UMP + CO2. Its pathway is pyrimidine metabolism; UMP biosynthesis via de novo pathway; UMP from orotate: step 2/2. In terms of biological role, catalyzes the decarboxylation of orotidine 5'-monophosphate (OMP) to uridine 5'-monophosphate (UMP). This chain is Orotidine 5'-phosphate decarboxylase, found in Idiomarina loihiensis (strain ATCC BAA-735 / DSM 15497 / L2-TR).